Here is a 251-residue protein sequence, read N- to C-terminus: Flagellar brake protein YcgR (251 aa).

Residues 127–239 (QRRDGFRVRP…ASRTLQRYID (113 aa)) enclose the PilZ domain.

Belongs to the YcgR family. In terms of assembly, monomer. Interacts with the flagellar basal bodies.

It is found in the bacterial flagellum basal body. Functionally, acts as a flagellar brake, regulating swimming and swarming in a bis-(3'-5') cyclic diguanylic acid (c-di-GMP)-dependent manner. Binds 1 c-di-GMP dimer per subunit. Increasing levels of c-di-GMP lead to decreased motility. The polypeptide is Flagellar brake protein YcgR (Leptothrix cholodnii (strain ATCC 51168 / LMG 8142 / SP-6) (Leptothrix discophora (strain SP-6))).